Reading from the N-terminus, the 932-residue chain is Leucine--tRNA ligase (932 aa).

The short motif at proline 38–histidine 48 is the 'HIGH' region element. The short motif at lysine 630 to serine 634 is the 'KMSKS' region element. Lysine 633 lines the ATP pocket.

The protein belongs to the class-I aminoacyl-tRNA synthetase family.

The protein resides in the cytoplasm. It carries out the reaction tRNA(Leu) + L-leucine + ATP = L-leucyl-tRNA(Leu) + AMP + diphosphate. The protein is Leucine--tRNA ligase of Archaeoglobus fulgidus (strain ATCC 49558 / DSM 4304 / JCM 9628 / NBRC 100126 / VC-16).